The following is a 1167-amino-acid chain: MSLRFLLGRSGSGKTTACLEEIRRQLQEDPKGRTIVYLVPEQMTFQCEYALIHTEGTEGMIRAQVFSFPRLAWRVLQETGGMNRYHVHDVGVQMMIRKIIEQRKQELKLFGRAADKSGFVEQLHEMIAECKRYCLTPDELRRHAGVLESGSGQPGRRLLADKLSDVALVYEELERSLLGHYLDSEDYLRLLVEHIPRSSYLHGADIYIDGFHHFSPQEYMVIEQLLHRCRRVTVCLTADRPYDVGMPDELDLFYLPAQTYRQLRELALANDIMIESPVVLSVNRRHQDKALAHLEEQFHRRPLLPYEAETDAICLYEAANRRAEIEAVAREIIRLVRDEGARYRDIALIIRQTEAYRDLVKTVFFDFDIPYFMDEKEPMHYHPLIELVRAALETVVTRWRYEAVFRAVKTDLLFPVDGDLAMWREAADKLENYVLAHGVKGEKWTSDERWTYRRYQALDGLNVPQTDEERQFEDKLNEWREALAAPLRRLERRLRRAADGRGLCTALYLFLEELQIPKKLEQMSAQAEADGRLVEARQHEQAWNAVVDLLDQYVEMLGAEPLPLAEFAKIIEAGLDRLEFALVPPAIDQVIVAQLDRSRLIDVKYAFIIGVNDGVIPAKVKDEGLVAEVEREQLRELGVALAPGGREQLFYDPFFVYLALACPSRRLYVTYPLADGEGKALMPSPLIKQLVQLFPRVSVHLCGNDPFDAPEEKPETFVTVPRATQTYLISQLRAWKRNYGIDPLWWDVYNVLISHPEWRARVEQAVSGLFYTNQAVLKREWSRRLYGKKIQASVSRMEQFQKCPYAHFASHGLRLKERNVFRLEAPDVGQLFHAAIKQIADRVREQHLDWKQLSRSECERLSAEAVERIAPLIQQQVLSSSNRYEYMKRKLKNVVARTTHVLSEHARASGFAPVGFELSFGPGGDLPPLRFQLRDGTVMELVGRIDRVDKAESSQGVLLRIIDYKSSAKTLDLTEVYYGLALQMFTYLDIVLTYAEQLVGEPALPAGVLYFHIHNPIIQAKQWLDNEMEVARKLLEPFRMRGLLLADAETIRLMDSQTENGQWSLIVPAQLTRTGAIHSRSSVASASDFAALRQHVRRLFVDIGGQIADGVVSIAPYKLKNKTACEFCAFKPVCQFDEALSGNGYRKLTPQTKDAVIETLGKREEES.

One can recognise a UvrD-like helicase ATP-binding domain in the interval 1 to 359 (MSLRFLLGRS…IRQTEAYRDL (359 aa)). 8 to 15 (GRSGSGKT) is a binding site for ATP. Positions 282–588 (VNRRHQDKAL…EFALVPPAID (307 aa)) constitute a UvrD-like helicase C-terminal domain. Residues Cys-803, Cys-1125, Cys-1128, and Cys-1134 each coordinate [4Fe-4S] cluster.

Belongs to the helicase family. AddB/RexB type 1 subfamily. As to quaternary structure, heterodimer of AddA and AddB. The cofactor is Mg(2+). [4Fe-4S] cluster serves as cofactor.

In terms of biological role, the heterodimer acts as both an ATP-dependent DNA helicase and an ATP-dependent, dual-direction single-stranded exonuclease. Recognizes the chi site generating a DNA molecule suitable for the initiation of homologous recombination. The AddB subunit has 5' -&gt; 3' nuclease activity but not helicase activity. The protein is ATP-dependent helicase/deoxyribonuclease subunit B of Geobacillus thermodenitrificans (strain NG80-2).